Here is a 128-residue protein sequence, read N- to C-terminus: Gastrotropin (128 aa).

Position 2 is an N-acetylalanine (A2).

This sequence belongs to the calycin superfamily. Fatty-acid binding protein (FABP) family. In terms of tissue distribution, found exclusively in the ileum and to a lesser extent in distal jejunum.

Its subcellular location is the cytoplasm. It is found in the membrane. In terms of biological role, binds to bile acids and is involved in enterohepatic bile acid metabolism. Required for efficient apical to basolateral transport of conjugated bile acids in ileal enterocytes. Stimulates gastric acid and pepsinogen secretion. The protein is Gastrotropin (FABP6) of Sus scrofa (Pig).